The following is a 255-amino-acid chain: Expansin-A25 (255 aa).

The signal sequence occupies residues Met1–Gly26. Residues Gly45–Gly160 enclose the Expansin-like EG45 domain. Residues Phe170–Ser249 form the Expansin-like CBD domain.

It belongs to the expansin family. Expansin A subfamily. Expressed in panicles and flowers.

It localises to the secreted. The protein localises to the cell wall. The protein resides in the membrane. Functionally, may cause loosening and extension of plant cell walls by disrupting non-covalent bonding between cellulose microfibrils and matrix glucans. No enzymatic activity has been found. May be required for rapid internodal elongation in deepwater rice during submergence. The sequence is that of Expansin-A25 (EXPA25) from Oryza sativa subsp. japonica (Rice).